Here is a 291-residue protein sequence, read N- to C-terminus: Tyramine--L-glutamate ligase (291 aa).

Residues 104-274 (KYPVKNLGCS…LAELLIKNAN (171 aa)) form the ATP-grasp domain. An ATP-binding site is contributed by 131 to 176 (KDYVKTPKTFKPKKYVIKKIDGCGGKFNLFDENFLIQEFVEGESLS). Residues D236, E247, and N249 each coordinate Mg(2+). Mn(2+) is bound by residues D236, E247, and N249.

It depends on Mg(2+) as a cofactor. Requires Mn(2+) as cofactor.

The enzyme catalyses tyramine + L-glutamate + ATP = gamma-L-glutamyltyramine + ADP + phosphate + H(+). Its pathway is cofactor biosynthesis; methanofuran biosynthesis. Functionally, catalyzes the formation of an amide bond between tyramine and the gamma carboxy group of L-glutamate. The enzyme also accepts phenylethylamine in vitro. The chain is Tyramine--L-glutamate ligase from Methanocaldococcus fervens (strain DSM 4213 / JCM 15782 / AG86) (Methanococcus fervens).